A 104-amino-acid polypeptide reads, in one-letter code: L-rhamnose mutarotase (104 aa).

Residue Tyr18 participates in substrate binding. The active-site Proton donor is the His22. Residues Tyr41 and 76-77 (WW) contribute to the substrate site.

This sequence belongs to the rhamnose mutarotase family. In terms of assembly, homodimer.

It localises to the cytoplasm. It carries out the reaction alpha-L-rhamnose = beta-L-rhamnose. It participates in carbohydrate metabolism; L-rhamnose metabolism. Functionally, involved in the anomeric conversion of L-rhamnose. This chain is L-rhamnose mutarotase, found in Escherichia coli (strain K12 / MC4100 / BW2952).